A 569-amino-acid polypeptide reads, in one-letter code: Urease subunit alpha (569 aa).

Residues 131–569 (GGIDTHIHFI…LPLAQRYLLL (439 aa)) enclose the Urease domain. His-136, His-138, and Lys-219 together coordinate Ni(2+). N6-carboxylysine is present on Lys-219. Residue His-221 coordinates substrate. Ni(2+)-binding residues include His-248 and His-274. His-322 serves as the catalytic Proton donor. Asp-362 is a binding site for Ni(2+).

This sequence belongs to the metallo-dependent hydrolases superfamily. Urease alpha subunit family. In terms of assembly, heterotrimer of UreA (gamma), UreB (beta) and UreC (alpha) subunits. Three heterotrimers associate to form the active enzyme. Requires Ni cation as cofactor. In terms of processing, carboxylation allows a single lysine to coordinate two nickel ions.

Its subcellular location is the cytoplasm. The enzyme catalyses urea + 2 H2O + H(+) = hydrogencarbonate + 2 NH4(+). Its pathway is nitrogen metabolism; urea degradation; CO(2) and NH(3) from urea (urease route): step 1/1. This Synechococcus sp. (strain CC9311) protein is Urease subunit alpha.